The primary structure comprises 391 residues: Pyoverdine export membrane fusion protein PvdR (391 aa).

Positions 1–24 (MRRTRSTRRALLVAVCLSPLIALA) are cleaved as a signal peptide. The stretch at 108 to 180 (IEMLKAQLAE…QASLRSDEAE (73 aa)) forms a coiled coil. The tract at residues 263 to 289 (LPVPPKPLDQSNQGGGSPTSGSGGQSG) is disordered. Residues 275 to 289 (QGGGSPTSGSGGQSG) are compositionally biased toward gly residues.

This sequence belongs to the membrane fusion protein (MFP) (TC 8.A.1) family. Part of the tripartite efflux system PvdRT-OpmQ, which is composed of an inner membrane component with both ATPase and permease domains, PvdT, a periplasmic membrane fusion protein, PvdR, and an outer membrane component, OpmQ.

It localises to the periplasm. Its function is as follows. Part of the tripartite efflux system PvdRT-OpmQ required for the secretion into the extracellular milieu of the siderophore pyoverdine (PVD), which is involved in iron acquisition. This subunit is an adapter protein that stimulates the ATPase activity of PvdT and connects the inner and outer membrane components. The system is responsible for export of newly synthesized PVD after the final steps of biosynthesis have taken place in the periplasm. It is also responsible for recycling of PVD after internalization of ferri-PVD into the periplasm by the outer-membrane receptor FpvA and release of iron from PVD, thus making PVD available for new cycles of iron uptake. In addition, can expel unwanted metals complexed with PVD from the periplasm into the extracellular medium. Does not contribute to resistance to antibiotics belonging to the classes of tetracyclines, aminoglycosides, beta-lactams and macrolides, and chloramphenicol. This is Pyoverdine export membrane fusion protein PvdR from Pseudomonas aeruginosa (strain ATCC 15692 / DSM 22644 / CIP 104116 / JCM 14847 / LMG 12228 / 1C / PRS 101 / PAO1).